The chain runs to 210 residues: Glutathione S-transferase P 2 (210 aa).

Positions 1–82 (SGYTLTYFPL…LLARYGLSGS (82 aa)) constitute a GST N-terminal domain. Residues Y7, R13, W38, K46, 53 to 54 (QI), and 66 to 67 (QS) each bind glutathione. A GST C-terminal domain is found at 83–204 (NEREIAINEM…KSEGRKRRPI (122 aa)).

It belongs to the GST superfamily. Pi family. Homodimer. As to expression, liver, kidney, muscle, skin, lung and ovary.

The enzyme catalyses RX + glutathione = an S-substituted glutathione + a halide anion + H(+). Conjugation of reduced glutathione to a wide number of exogenous and endogenous hydrophobic electrophiles. The sequence is that of Glutathione S-transferase P 2 from Bufo bufo (European toad).